A 101-amino-acid polypeptide reads, in one-letter code: Protein S100-A7 (101 aa).

At serine 2 the chain carries N-acetylserine. EF-hand domains are found at residues 13–48 (MIDM…SACD) and 50–85 (KGTN…IATD). Zn(2+) is bound by residues histidine 18 and aspartate 25. A disulfide bridge links cysteine 47 with cysteine 96. 5 residues coordinate Ca(2+): aspartate 63, asparagine 65, aspartate 67, lysine 69, and glutamate 74. Zn(2+)-binding residues include histidine 87 and histidine 91.

Interacts with RANBP9. Fetal ear, skin, and tongue and human cell lines. Highly up-regulated in psoriatic epidermis. Also highly expressed in the urine of bladder squamous cell carcinoma (SCC) bearing patients.

The protein localises to the cytoplasm. Its subcellular location is the secreted. This chain is Protein S100-A7 (S100A7), found in Homo sapiens (Human).